A 92-amino-acid chain; its full sequence is Ezrin (92 aa).

The FERM domain maps to 1–72 (QLFDQVVKGF…PDFVFYAPRR (72 aa)). The residue at position 15 (Lys-15) is an N6-acetyllysine. Residues 42 to 92 (EIRNISFNDKKFVIKPIDKKAPDFVFYAPRRKPDTIEVQQMKLQDFEQKTK) are interaction with SCYL3.

In terms of assembly, interacts with PALS1 and NHERF2. Found in a complex with EZR, PODXL and NHERF2. Interacts with MCC, PLEKHG6, PODXL, SCYL3/PACE1, NHERF1 and TMEM8B. Interacts (when phosphorylated) with FES/FPS. Interacts with dimeric S100P, the interaction may be activating through unmasking of F-actin binding sites. Identified in complexes that contain VIM, EZR, AHNAK, BFSP1, BFSP2, ANK2, PLEC, PRX and spectrin. Detected in a complex composed of at least EZR, AHNAK, PPL and PRX. Interacts with PDPN (via cytoplasmic domain); activates RHOA and promotes epithelial-mesenchymal transition. Interacts with SPN/CD43 cytoplasmic tail, CD44 and ICAM2. Interacts with CLIC5; may work together in a complex which also includes RDX and MYO6 to stabilize linkages between the plasma membrane and subjacent actin cytoskeleton at the base of stereocilia. Post-translationally, phosphorylated by tyrosine-protein kinases. Phosphorylation by ROCK2 suppresses the head-to-tail association of the N-terminal and C-terminal halves resulting in an opened conformation which is capable of actin and membrane-binding. In terms of processing, S-nitrosylation is induced by interferon-gamma and oxidatively-modified low-densitity lipoprotein (LDL(ox)) possibly implicating the iNOS-S100A8/9 transnitrosylase complex.

The protein localises to the apical cell membrane. It localises to the cell projection. It is found in the microvillus membrane. Its subcellular location is the ruffle membrane. The protein resides in the cytoplasm. The protein localises to the cell cortex. It localises to the cytoskeleton. It is found in the microvillus. With respect to regulation, a head-to-tail association, of the N-terminal and C-terminal halves results in a closed conformation (inactive form) which is incapable of actin or membrane-binding. Probably involved in connections of major cytoskeletal structures to the plasma membrane. In epithelial cells, required for the formation of microvilli and membrane ruffles on the apical pole. Along with PLEKHG6, required for normal macropinocytosis. The protein is Ezrin of Mesocricetus auratus (Golden hamster).